The following is a 444-amino-acid chain: tRNA modification GTPase MnmE (444 aa).

(6S)-5-formyl-5,6,7,8-tetrahydrofolate-binding residues include R23, E82, and K121. One can recognise a TrmE-type G domain in the interval 216–365 (GTSIVLAGLP…LKQALQKWLN (150 aa)). N226 is a K(+) binding site. Residues 226-231 (NAGKSS), 245-251 (TDIPGTT), and 270-273 (DSAG) contribute to the GTP site. A Mg(2+)-binding site is contributed by S230. K(+) is bound by residues T245, I247, and T250. Mg(2+) is bound at residue T251. K444 is a (6S)-5-formyl-5,6,7,8-tetrahydrofolate binding site.

This sequence belongs to the TRAFAC class TrmE-Era-EngA-EngB-Septin-like GTPase superfamily. TrmE GTPase family. Homodimer. Heterotetramer of two MnmE and two MnmG subunits. The cofactor is K(+).

The protein localises to the cytoplasm. Exhibits a very high intrinsic GTPase hydrolysis rate. Involved in the addition of a carboxymethylaminomethyl (cmnm) group at the wobble position (U34) of certain tRNAs, forming tRNA-cmnm(5)s(2)U34. This Chlamydia trachomatis serovar L2 (strain ATCC VR-902B / DSM 19102 / 434/Bu) protein is tRNA modification GTPase MnmE.